The sequence spans 62 residues: Large ribosomal subunit protein bL32 (62 aa).

The segment covering 1 to 16 (MAVPKRKTSPMKRGFR) has biased composition (basic residues). The disordered stretch occupies residues 1-62 (MAVPKRKTSP…QILTPKNKEA (62 aa)). Residues 28–44 (VEDKDSGELRRPHHVDL) show a composition bias toward basic and acidic residues.

This sequence belongs to the bacterial ribosomal protein bL32 family.

This chain is Large ribosomal subunit protein bL32, found in Methylocella silvestris (strain DSM 15510 / CIP 108128 / LMG 27833 / NCIMB 13906 / BL2).